The following is a 564-amino-acid chain: Probable diguanylate cyclase DgcQ (564 aa).

The next 2 helical transmembrane spans lie at 20-40 (LGPG…STLL) and 360-380 (IALT…WYVI). The GGDEF domain maps to 428 to 563 (HPFSVIQVDL…GRNRVFASDN (136 aa)). Asp436 provides a ligand contact to Mg(2+). Substrate-binding residues include Asn444, His449, and Asp453. Glu479 serves as a coordination point for Mg(2+). Glu479 acts as the Proton acceptor in catalysis.

In terms of assembly, homodimer. The cofactor is Mg(2+).

It localises to the cell inner membrane. The enzyme catalyses 2 GTP = 3',3'-c-di-GMP + 2 diphosphate. The protein operates within glycan metabolism; bacterial cellulose biosynthesis. It participates in purine metabolism; 3',5'-cyclic di-GMP biosynthesis. Catalyzes the synthesis of cyclic-di-GMP (c-di-GMP) via the condensation of 2 GTP molecules. Cyclic-di-GMP is a second messenger which controls cell surface-associated traits in bacteria. Involved in the regulation of cellulose production. The polypeptide is Probable diguanylate cyclase DgcQ (Escherichia coli O157:H7).